We begin with the raw amino-acid sequence, 274 residues long: MLSVAARSGPFAPVLSATSRGVAGALRPLVQATVPATPEQPVLDLKRPFLSRESLSGQAVRRPLVASVGLNVPASVCYSHTDIKVPDFSEYRRLEVLDSTKSSRESSEARKGFSYLVTGVTTVGVAYAAKNAVTQFVSSMSASADVLALAKIEIKLSDIPEGKNMAFKWRGKPLFVRHRTQKEIEQEAAVELSQLRDPQHDLDRVKKPEWVILIGVCTHLGCVPIANAGDFGGYYCPCHGSHYDASGRIRLGPAPLNLEVPTYEFTSDDMVIVG.

Over 79–103 (SHTDIKVPDFSEYRRLEVLDSTKSS) the chain is Mitochondrial matrix. Residues 104–140 (RESSEARKGFSYLVTGVTTVGVAYAAKNAVTQFVSSM) form a helical membrane-spanning segment. Over 141–274 (SASADVLALA…FTSDDMVIVG (134 aa)) the chain is Mitochondrial intermembrane. Residues 187-272 (EAAVELSQLR…YEFTSDDMVI (86 aa)) form the Rieske domain. Residues Cys217, His219, Cys236, His239, and Ser241 each coordinate [2Fe-2S] cluster. Cys222 and Cys238 form a disulfide bridge.

It belongs to the Rieske iron-sulfur protein family. In terms of assembly, component of the ubiquinol-cytochrome c oxidoreductase (cytochrome b-c1 complex, complex III, CIII), a multisubunit enzyme composed of 11 subunits. The complex is composed of 3 respiratory subunits cytochrome b, cytochrome c1 and Rieske protein UQCRFS1, 2 core protein subunits UQCRC1/QCR1 and UQCRC2/QCR2, and 6 low-molecular weight protein subunits UQCRH/QCR6, UQCRB/QCR7, UQCRQ/QCR8, UQCR10/QCR9, UQCR11/QCR10 and subunit 9, the cleavage product of Rieske protein UQCRFS1. The complex exists as an obligatory dimer and forms supercomplexes (SCs) in the inner mitochondrial membrane with NADH-ubiquinone oxidoreductase (complex I, CI) and cytochrome c oxidase (complex IV, CIV), resulting in different assemblies (supercomplex SCI(1)III(2)IV(1) and megacomplex MCI(2)III(2)IV(2)). Incorporation of the Rieske protein UQCRFS1 is the penultimate step in complex III assembly. Interacts with TTC19, which is involved in the clearance of UQCRFS1 fragments. Component of the ubiquinol-cytochrome c oxidoreductase (cytochrome b-c1 complex, complex III, CIII). Subunit 9 corresponds to the mitochondrial targeting sequence (MTS) of Rieske protein UQCRFS1. It is retained after processing and incorporated inside complex III, where it remains bound to the complex and localizes between the 2 core subunits UQCRC1/QCR1 and UQCRC2/QCR2. It depends on [2Fe-2S] cluster as a cofactor. In terms of processing, proteolytic processing is necessary for the correct insertion of UQCRFS1 in the complex III dimer. Several fragments are generated during UQCRFS1 insertion, most probably due to the endogenous matrix-processing peptidase (MPP) activity of the 2 core protein subunits UQCRC1/QCR1 and UQCRC2/QCR2, which are homologous to the 2 mitochondrial-processing peptidase (MPP) subunits beta-MPP and alpha-MPP respectively. The action of the protease is also necessary for the clearance of the UQCRFS1 fragments.

The protein localises to the mitochondrion inner membrane. It carries out the reaction a quinol + 2 Fe(III)-[cytochrome c](out) = a quinone + 2 Fe(II)-[cytochrome c](out) + 2 H(+)(out). In terms of biological role, component of the ubiquinol-cytochrome c oxidoreductase, a multisubunit transmembrane complex that is part of the mitochondrial electron transport chain which drives oxidative phosphorylation. The respiratory chain contains 3 multisubunit complexes succinate dehydrogenase (complex II, CII), ubiquinol-cytochrome c oxidoreductase (cytochrome b-c1 complex, complex III, CIII) and cytochrome c oxidase (complex IV, CIV), that cooperate to transfer electrons derived from NADH and succinate to molecular oxygen, creating an electrochemical gradient over the inner membrane that drives transmembrane transport and the ATP synthase. The cytochrome b-c1 complex catalyzes electron transfer from ubiquinol to cytochrome c, linking this redox reaction to translocation of protons across the mitochondrial inner membrane, with protons being carried across the membrane as hydrogens on the quinol. In the process called Q cycle, 2 protons are consumed from the matrix, 4 protons are released into the intermembrane space and 2 electrons are passed to cytochrome c. The Rieske protein is a catalytic core subunit containing a [2Fe-2S] iron-sulfur cluster. It cycles between 2 conformational states during catalysis to transfer electrons from the quinol bound in the Q(0) site in cytochrome b to cytochrome c1. Incorporation of UQCRFS1 is the penultimate step in complex III assembly. Component of the ubiquinol-cytochrome c oxidoreductase (cytochrome b-c1 complex, complex III, CIII). UQCRFS1 undergoes proteolytic processing once it is incorporated in the complex III dimer. One of the fragments, called subunit 9, corresponds to its mitochondrial targeting sequence (MTS). The proteolytic processing is necessary for the correct insertion of UQCRFS1 in the complex III dimer, but the persistence of UQCRFS1-derived fragments may prevent newly imported UQCRFS1 to be processed and assembled into complex III and is detrimental for the complex III structure and function. The chain is Cytochrome b-c1 complex subunit Rieske, mitochondrial (UQCRFS1) from Gorilla gorilla gorilla (Western lowland gorilla).